A 649-amino-acid polypeptide reads, in one-letter code: DNA mismatch repair protein MutL (649 aa).

The segment at 339–414 (KKKTKDESVQ…VREEESWQST (76 aa)) is disordered. Positions 342–360 (TKDESVQEQFHFEHTKPKE) are enriched in basic and acidic residues. A compositionally biased stretch (low complexity) spans 388–402 (PQLWQQPKQEWQPPQ).

It belongs to the DNA mismatch repair MutL/HexB family.

This protein is involved in the repair of mismatches in DNA. It is required for dam-dependent methyl-directed DNA mismatch repair. May act as a 'molecular matchmaker', a protein that promotes the formation of a stable complex between two or more DNA-binding proteins in an ATP-dependent manner without itself being part of a final effector complex. The chain is DNA mismatch repair protein MutL from Bacillus cytotoxicus (strain DSM 22905 / CIP 110041 / 391-98 / NVH 391-98).